The sequence spans 340 residues: Entry-fusion complex protein OPG094 (340 aa).

Residues 1 to 20 form a disordered region; that stretch reads MGGGVSVELPKRDPPPGVPT. G2 carries N-myristoyl glycine; by host lipidation. Residues 2-319 lie on the Virion surface side of the membrane; the sequence is GGGVSVELPK…VQHNIKHSFD (318 aa). Residues 320–340 form a helical; Signal-anchor for type II membrane protein membrane-spanning segment; it reads LKLHLISLLSLLVIWILIVAI.

This sequence belongs to the orthopoxvirus OPG086 family. Interacts with OPG143. Component of the entry fusion complex (EFC) composed of OPG053, OPG076, OPG086, OPG094, OPG095, OPG099, OPG107, OPG143, OPG104, OPG147 and OPG155. Except for OPG095 and OPG053, each of the EFC proteins is required for assembly or stability of the complex. In terms of processing, unglycosylated because produced in viral factories instead of the classic ER -Golgi route.

It localises to the virion membrane. Functionally, component of the entry fusion complex (EFC), which consists of 11 proteins. During cell infection, this complex mediates entry of the virion core into the host cytoplasm by a two-step mechanism consisting of lipid mixing of the viral and cellular membranes and subsequent pore formation. The chain is Entry-fusion complex protein OPG094 (OPG094) from Cynomys gunnisoni (Gunnison's prairie dog).